A 162-amino-acid polypeptide reads, in one-letter code: MSMIPISNRRRLSPGDRIWEPFELMNTFLDFPSPALFLSHHFPSLSREIFPQTSSSTVNTQLNWTETPTAHVFKAYLPGVDQDEVIAFVDEEGYLQICTGDNKFMSRFKLPNNALTDQVTAWMEDEFLVVFVEKDASSSPPQLPEIEENRNVRVVEITGDDD.

The sHSP domain maps to 53–149 (TSSSTVNTQL…PPQLPEIEEN (97 aa)).

The protein belongs to the small heat shock protein (HSP20) family. As to quaternary structure, may form oligomeric structures.

It localises to the cytoplasm. The sequence is that of 18.5 kDa class IV heat shock protein (HSP18.5) from Arabidopsis thaliana (Mouse-ear cress).